The sequence spans 1447 residues: Baculoviral IAP repeat-containing protein 1b (1447 aa).

BIR repeat units follow at residues 60 to 127 (EAKR…CEFL), 159 to 227 (EEAR…CEFL), and 278 to 345 (EELR…CVFL). Zn(2+)-binding residues include C315, C318, H335, and C342. One can recognise an NACHT domain in the interval 508-802 (SVMCVEGEAG…EFLAAVRLTE (295 aa)). Position 520 (K520) interacts with ATP.

As to quaternary structure, component of the NLRC4 inflammasome, at least composed of NLRC4, caspase-1 (CASP1) and some NAIP protein. Interacts with S.typhimurium (Salmonella) PrgJ and B.thailandensis BsaK.

In terms of biological role, sensor component of the NLRC4 inflammasome that specifically recognizes and binds type III secretion system (T3SS) rod proteins such as S.typhimurium (Salmonella) PrgJ and B.thailandensis BsaK from pathogenic bacteria. Association of pathogenic bacteria proteins drives in turn drive assembly and activation of the NLRC4 inflammasome, promoting caspase-1 activation, cytokine production and macrophage pyroptosis. The NLRC4 inflammasome is activated as part of the innate immune response to a range of intracellular bacteria. The NLRC4 inflammasome senses Gram-negative bacteria such as L.pneumophila and P.aeruginosa, enteric pathogens S.typhimurium (Salmonella) and S.flexneri. Prevents motor-neuron apoptosis induced by a variety of signals. In Mus musculus (Mouse), this protein is Baculoviral IAP repeat-containing protein 1b (Naip2).